The following is a 276-amino-acid chain: N-alpha-acetyltransferase 60 (276 aa).

The N-acetyltransferase domain maps to 34 to 239 (VQLRFLVPDD…WTLLDHIKHY (206 aa)). Tyrosine 59 provides a ligand contact to substrate. Tyrosine 139 is a catalytic residue. Residue leucine 141 coordinates substrate. Acetyl-CoA is bound by residues 143–145 (LGV) and 151–156 (RNGIGS). Residue histidine 180 is part of the active site. Residues asparagine 185 and 192-195 (YEKR) contribute to the acetyl-CoA site. Positions 204-215 (PYYYNIRGKGKD) are required for homodimerization. Tyrosine 207 lines the substrate pocket.

It belongs to the acetyltransferase family. NAA60 subfamily.

The enzyme catalyses N-terminal L-methionyl-[transmembrane protein] + acetyl-CoA = N-terminal N(alpha)-acetyl-L-methionyl-[transmembrane protein] + CoA + H(+). It carries out the reaction L-lysyl-[protein] + acetyl-CoA = N(6)-acetyl-L-lysyl-[protein] + CoA + H(+). Functionally, displays alpha (N-terminal) acetyltransferase activity towards a range of N-terminal sequences including those starting with Met-Lys, Met-Val, Met-Ala and Met-Met. Required for normal chromosomal segregation during anaphase. In terms of biological role, shows histone acetyltransferase activity toward free histones. Its function is as follows. Does not show histone acetyltransferase activity toward free histones. In Drosophila melanogaster (Fruit fly), this protein is N-alpha-acetyltransferase 60.